A 337-amino-acid chain; its full sequence is Tetraacyldisaccharide 4'-kinase (337 aa).

51–58 (HLGGAGKT) is an ATP binding site.

Belongs to the LpxK family.

The enzyme catalyses a lipid A disaccharide + ATP = a lipid IVA + ADP + H(+). Its pathway is glycolipid biosynthesis; lipid IV(A) biosynthesis; lipid IV(A) from (3R)-3-hydroxytetradecanoyl-[acyl-carrier-protein] and UDP-N-acetyl-alpha-D-glucosamine: step 6/6. In terms of biological role, transfers the gamma-phosphate of ATP to the 4'-position of a tetraacyldisaccharide 1-phosphate intermediate (termed DS-1-P) to form tetraacyldisaccharide 1,4'-bis-phosphate (lipid IVA). This chain is Tetraacyldisaccharide 4'-kinase, found in Nitrobacter winogradskyi (strain ATCC 25391 / DSM 10237 / CIP 104748 / NCIMB 11846 / Nb-255).